A 291-amino-acid polypeptide reads, in one-letter code: Segregation and condensation protein A (291 aa).

Belongs to the ScpA family. Component of a cohesin-like complex composed of ScpA, ScpB and the Smc homodimer, in which ScpA and ScpB bind to the head domain of Smc. The presence of the three proteins is required for the association of the complex with DNA.

Its subcellular location is the cytoplasm. Functionally, participates in chromosomal partition during cell division. May act via the formation of a condensin-like complex containing Smc and ScpB that pull DNA away from mid-cell into both cell halves. This Malacoplasma penetrans (strain HF-2) (Mycoplasma penetrans) protein is Segregation and condensation protein A.